Consider the following 309-residue polypeptide: Elongation factor Ts (309 aa).

Residues 82–85 (TDFV) form an involved in Mg(2+) ion dislocation from EF-Tu region.

The protein belongs to the EF-Ts family.

Its subcellular location is the cytoplasm. Its function is as follows. Associates with the EF-Tu.GDP complex and induces the exchange of GDP to GTP. It remains bound to the aminoacyl-tRNA.EF-Tu.GTP complex up to the GTP hydrolysis stage on the ribosome. The chain is Elongation factor Ts (tsf) from Rickettsia prowazekii (strain Madrid E).